The primary structure comprises 56 residues: Large ribosomal subunit protein bL32 (56 aa).

The disordered stretch occupies residues 1–37 (MAVQQNKKSRSRRDMRRSHDALTTAAVSVDKTTGETH). Over residues 7–16 (KKSRSRRDMR) the composition is skewed to basic residues.

This sequence belongs to the bacterial ribosomal protein bL32 family.

This is Large ribosomal subunit protein bL32 from Haemophilus ducreyi (strain 35000HP / ATCC 700724).